A 342-amino-acid polypeptide reads, in one-letter code: GTP 3',8-cyclase (342 aa).

The 230-residue stretch at 18-247 (GFSRRFYYLR…QLRGADDGPA (230 aa)) folds into the Radical SAM core domain. Residue R27 coordinates GTP. [4Fe-4S] cluster-binding residues include C34 and C38. An S-adenosyl-L-methionine-binding site is contributed by Y40. Residue C41 participates in [4Fe-4S] cluster binding. Residue R81 coordinates GTP. G85 provides a ligand contact to S-adenosyl-L-methionine. A GTP-binding site is contributed by T112. An S-adenosyl-L-methionine-binding site is contributed by S136. K173 provides a ligand contact to GTP. M207 is an S-adenosyl-L-methionine binding site. Positions 270 and 273 each coordinate [4Fe-4S] cluster. Residue 275-277 (RLR) participates in GTP binding. C287 contributes to the [4Fe-4S] cluster binding site.

It belongs to the radical SAM superfamily. MoaA family. Monomer and homodimer. [4Fe-4S] cluster serves as cofactor.

The catalysed reaction is GTP + AH2 + S-adenosyl-L-methionine = (8S)-3',8-cyclo-7,8-dihydroguanosine 5'-triphosphate + 5'-deoxyadenosine + L-methionine + A + H(+). The protein operates within cofactor biosynthesis; molybdopterin biosynthesis. Functionally, catalyzes the cyclization of GTP to (8S)-3',8-cyclo-7,8-dihydroguanosine 5'-triphosphate. The polypeptide is GTP 3',8-cyclase (Aeromonas hydrophila subsp. hydrophila (strain ATCC 7966 / DSM 30187 / BCRC 13018 / CCUG 14551 / JCM 1027 / KCTC 2358 / NCIMB 9240 / NCTC 8049)).